The sequence spans 258 residues: UPF0246 protein PM0066 (258 aa).

This sequence belongs to the UPF0246 family.

The chain is UPF0246 protein PM0066 from Pasteurella multocida (strain Pm70).